Consider the following 486-residue polypeptide: Ribosomal RNA small subunit methyltransferase F (486 aa).

Residues Ala124–Lys130, Glu148, Asp175, and Asp193 each bind S-adenosyl-L-methionine. The Nucleophile role is filled by Cys246.

The protein belongs to the class I-like SAM-binding methyltransferase superfamily. RsmB/NOP family.

Its subcellular location is the cytoplasm. The enzyme catalyses cytidine(1407) in 16S rRNA + S-adenosyl-L-methionine = 5-methylcytidine(1407) in 16S rRNA + S-adenosyl-L-homocysteine + H(+). Functionally, specifically methylates the cytosine at position 1407 (m5C1407) of 16S rRNA. The polypeptide is Ribosomal RNA small subunit methyltransferase F (Shewanella putrefaciens (strain CN-32 / ATCC BAA-453)).